Consider the following 443-residue polypeptide: Nuclear pore complex-interacting protein family member B15 (443 aa).

The signal sequence occupies residues 1–18; it reads MRLRFWLLIWLLLGFISH. Asn-111 carries N-linked (GlcNAc...) asparagine glycosylation. 2 disordered regions span residues 242–262 and 330–413; these read RMGR…NSLS and SPLP…TRHC. A compositionally biased stretch (polar residues) spans 252–262; the sequence is QQHSITDNSLS. The span at 351–393 shows a compositional bias: basic and acidic residues; that stretch reads EAEKPPKPKRWRVDEVEQSPKPKRRRADEVEQSPKPKRQREAE. Over residues 399-412 the composition is skewed to basic residues; sequence KPKRRRLSKLRTRH.

This sequence belongs to the NPIP family.

Its subcellular location is the secreted. In Homo sapiens (Human), this protein is Nuclear pore complex-interacting protein family member B15 (NPIPB15).